A 774-amino-acid polypeptide reads, in one-letter code: Transforming acidic coiled-coil-containing protein 1 (774 aa).

N-acetylalanine is present on A2. Positions 2–56 (AFSPWQILSPVQWAKWTWSAVRGSGAGEDEAGGPEGDPEEEEDSQAETKSLSFSS) are interaction with LSM7 and SNRPG. Phosphoserine occurs at positions 4, 10, and 45. The disordered stretch occupies residues 21 to 142 (AVRGSGAGED…VKDVRGKAEH (122 aa)). Positions 28 to 46 (GEDEAGGPEGDPEEEEDSQ) are enriched in acidic residues. The span at 48 to 61 (ETKSLSFSSDSEGN) shows a compositional bias: polar residues. Basic and acidic residues predominate over residues 88 to 99 (PEAKPQESREAD). A compositionally biased stretch (polar residues) spans 113–128 (DTCSRSSENEAPQATV). The segment covering 131-142 (HPVKDVRGKAEH) has biased composition (basic and acidic residues). Phosphoserine occurs at positions 148 and 154. The interaction with TDRD7 stretch occupies residues 153 to 255 (FSIETRNCTD…PEMLMEGSPL (103 aa)). An interaction with YEATS4 region spans residues 207–424 (EAFTEASLKT…NNINTDDSGD (218 aa)). Positions 214–428 (LKTGGPCPEP…TDDSGDPCKP (215 aa)) are disordered. SPAZ domains follow at residues 216-294 (TGGP…TAGV) and 354-504 (SKPV…TDEE). Phosphoserine; by AURKC is present on S228. The segment covering 228–241 (SKLRKPKPVSLRKK) has biased composition (basic residues). Phosphoserine occurs at positions 376 and 401. A compositionally biased stretch (polar residues) spans 397–407 (ILQNSPPLSSK). The Bipartite nuclear localization signal signature appears at 452-468 (PKKAKSRLITSGCKVKK). Phosphoserine is present on residues S480 and S560. Positions 579 to 774 (IREEIITKEI…ELIAKLGKTD (196 aa)) form a coiled coil. Residues 670 to 774 (VLEGFKKNEE…ELIAKLGKTD (105 aa)) are interaction with CH-TOG.

Belongs to the TACC family. As to quaternary structure, interacts with CH-TOG and YEATS4. Interacts with the AURKA and AURKB and AURKC. Interacts with LSM7, TDRD7 and SNRPG. Interacts with GCN5L2 and PCAF. Interacts with the thyroid hormone receptors THRB and THRA, predominantly with isoform alpha-2. The interaction with THRA isoform alpha-1 and THRB is decreased in the presence of thyroid hormone T3. Interacts with RARA in the nucleus. Also interacts with other nuclear receptors, including ESR1, NR3C1, PPARG and RXRA, preferentially in the absence of their hormonal ligands.

The protein localises to the cytoplasm. The protein resides in the nucleus. Its subcellular location is the cytoskeleton. It is found in the microtubule organizing center. It localises to the centrosome. The protein localises to the midbody. Functionally, involved in transcription regulation induced by nuclear receptors, including in T3 thyroid hormone and all-trans retinoic acid pathways. Might promote the nuclear localization of the receptors. Likely involved in the processes that promote cell division prior to the formation of differentiated tissues. This Mus musculus (Mouse) protein is Transforming acidic coiled-coil-containing protein 1 (Tacc1).